The chain runs to 248 residues: Large ribosomal subunit protein uL30 (248 aa).

An N-acetylmethionine modification is found at Met1. Repeat copies occupy residues 7–18 (KKKKVPAVPETL), 19–30 (KKKRKNFAELKI), 31–42 (KRLRKKFAQKML), and 43–54 (RKARRKLIYEKA). Residues 7–54 (KKKKVPAVPETLKKKRKNFAELKIKRLRKKFAQKMLRKARRKLIYEKA) are 4 X 12 AA tandem repeats. The residue at position 17 (Thr17) is a Phosphothreonine. Lys124 is subject to N6-acetyllysine. An N6-succinyllysine modification is found at Lys127. Tyr139 is modified (phosphotyrosine).

Belongs to the universal ribosomal protein uL30 family. Component of the large ribosomal subunit. Homodimer. Interacts with DHX33.

It is found in the cytoplasm. Functionally, component of the large ribosomal subunit. The ribosome is a large ribonucleoprotein complex responsible for the synthesis of proteins in the cell. Binds to G-rich structures in 28S rRNA and in mRNAs. Plays a regulatory role in the translation apparatus; inhibits cell-free translation of mRNAs. The polypeptide is Large ribosomal subunit protein uL30 (RPL7) (Bos taurus (Bovine)).